A 152-amino-acid polypeptide reads, in one-letter code: Transcriptional regulator MraZ (152 aa).

2 consecutive SpoVT-AbrB domains span residues Val-5–Glu-52 and Ala-81–Gln-124.

This sequence belongs to the MraZ family. In terms of assembly, forms oligomers.

It localises to the cytoplasm. It is found in the nucleoid. The sequence is that of Transcriptional regulator MraZ from Actinobacillus pleuropneumoniae serotype 3 (strain JL03).